The chain runs to 55 residues: Large ribosomal subunit protein bL33 (55 aa).

This sequence belongs to the bacterial ribosomal protein bL33 family.

The protein is Large ribosomal subunit protein bL33 of Methylacidiphilum infernorum (isolate V4) (Methylokorus infernorum (strain V4)).